The chain runs to 431 residues: Phosphomethylpyrimidine synthase (431 aa).

Substrate is bound by residues Asn-66, Met-95, Tyr-124, His-163, 185–187 (SRG), 226–229 (DGLR), and Glu-265. Position 269 (His-269) interacts with Zn(2+). A substrate-binding site is contributed by Tyr-292. His-333 contributes to the Zn(2+) binding site. The [4Fe-4S] cluster site is built by Cys-408, Cys-411, and Cys-415.

Belongs to the ThiC family. Requires [4Fe-4S] cluster as cofactor.

The enzyme catalyses 5-amino-1-(5-phospho-beta-D-ribosyl)imidazole + S-adenosyl-L-methionine = 4-amino-2-methyl-5-(phosphooxymethyl)pyrimidine + CO + 5'-deoxyadenosine + formate + L-methionine + 3 H(+). The protein operates within cofactor biosynthesis; thiamine diphosphate biosynthesis. Its function is as follows. Catalyzes the synthesis of the hydroxymethylpyrimidine phosphate (HMP-P) moiety of thiamine from aminoimidazole ribotide (AIR) in a radical S-adenosyl-L-methionine (SAM)-dependent reaction. This Dehalococcoides mccartyi (strain CBDB1) protein is Phosphomethylpyrimidine synthase.